Here is a 662-residue protein sequence, read N- to C-terminus: DNA ligase (662 aa).

NAD(+) contacts are provided by residues 31-35 (DSEYD), 79-80 (SL), and Glu119. Lys121 functions as the N6-AMP-lysine intermediate in the catalytic mechanism. Arg142, Glu176, Lys288, and Lys312 together coordinate NAD(+). Residues Cys405, Cys408, Cys421, and Cys427 each contribute to the Zn(2+) site. Residues 583–662 (NIEKKLDNLT…DELNSFLDNL (80 aa)) enclose the BRCT domain.

The protein belongs to the NAD-dependent DNA ligase family. LigA subfamily. Mg(2+) serves as cofactor. Mn(2+) is required as a cofactor.

The enzyme catalyses NAD(+) + (deoxyribonucleotide)n-3'-hydroxyl + 5'-phospho-(deoxyribonucleotide)m = (deoxyribonucleotide)n+m + AMP + beta-nicotinamide D-nucleotide.. Its function is as follows. DNA ligase that catalyzes the formation of phosphodiester linkages between 5'-phosphoryl and 3'-hydroxyl groups in double-stranded DNA using NAD as a coenzyme and as the energy source for the reaction. It is essential for DNA replication and repair of damaged DNA. This Finegoldia magna (strain ATCC 29328 / DSM 20472 / WAL 2508) (Peptostreptococcus magnus) protein is DNA ligase.